Consider the following 618-residue polypeptide: Membrane protein insertase YidC (618 aa).

A run of 6 helical transmembrane segments spans residues 3 to 23 (KNTI…SFLS), 363 to 383 (WGLS…IVVF), 439 to 459 (LPML…PSAI), 478 to 498 (FITF…FCLL), 520 to 540 (PQMA…LFVL), and 545 to 565 (SGLN…MIIL).

Belongs to the OXA1/ALB3/YidC family. Type 1 subfamily. Interacts with the Sec translocase complex via SecD. Specifically interacts with transmembrane segments of nascent integral membrane proteins during membrane integration.

The protein localises to the cell inner membrane. Its function is as follows. Required for the insertion and/or proper folding and/or complex formation of integral membrane proteins into the membrane. Involved in integration of membrane proteins that insert both dependently and independently of the Sec translocase complex, as well as at least some lipoproteins. Aids folding of multispanning membrane proteins. This is Membrane protein insertase YidC from Bacteroides fragilis (strain ATCC 25285 / DSM 2151 / CCUG 4856 / JCM 11019 / LMG 10263 / NCTC 9343 / Onslow / VPI 2553 / EN-2).